A 776-amino-acid chain; its full sequence is Kinesin-like protein KLP1 (776 aa).

Residues 5 to 335 (AVKVFVRTRP…LRFASRVRTL (331 aa)) form the Kinesin motor domain. Residue 91–98 (GQTGAGKT) coordinates ATP. The stretch at 348–371 (ALLLRRYERQIKELKAELAMRDTL) forms a coiled coil. The disordered stretch occupies residues 441-535 (RRATEEGSGA…SNWGDAGPLS (95 aa)). The segment covering 447-460 (GSGAAARGGDSAGP) has biased composition (low complexity). A coiled-coil region spans residues 579–657 (ALADTKASIR…SLKSAREELE (79 aa)). The segment at 658–776 (PQIQAVAVAR…TQAVNRGLAR (119 aa)) is globular.

The protein belongs to the TRAFAC class myosin-kinesin ATPase superfamily. Kinesin family.

The protein resides in the cytoplasm. The protein localises to the cytoskeleton. It is found in the flagellum axoneme. Functionally, may play a role in rotation or twisting of the central pair microtubules of the flagella axoneme. The sequence is that of Kinesin-like protein KLP1 (KLP1) from Chlamydomonas reinhardtii (Chlamydomonas smithii).